A 1239-amino-acid chain; its full sequence is Inner tegument protein (1239 aa).

4 disordered regions span residues Met-1–Pro-20, Gly-669–Pro-704, Arg-959–Pro-980, and Gly-1087–Glu-1239. The interaction with large tegument protein stretch occupies residues Asn-615 to Glu-1239. Positions Asp-1112–Phe-1123 are enriched in low complexity. Positions Val-1139–Gly-1148 are enriched in gly residues. Over residues Glu-1151–Glu-1170 the composition is skewed to basic and acidic residues. The segment covering Arg-1180 to Ala-1189 has biased composition (low complexity). Residues Val-1219 to Pro-1232 are compositionally biased toward basic residues.

This sequence belongs to the herpesviridae inner tegument protein family. As to quaternary structure, interacts (via C-terminus) with the large tegument protein/LTP (via N-terminus).

It localises to the virion tegument. Its subcellular location is the host cytoplasm. It is found in the host nucleus. The protein resides in the host Golgi apparatus. The protein localises to the host trans-Golgi network. Plays an essential role in cytoplasmic secondary envelopment during viral egress. Interacts with the capsid via the large tegument protein/LTP and participates in its transport to the host trans-Golgi network (TGN) where secondary envelopment occurs. Modulates tegumentation and capsid accumulation at the viral assembly complex. This is Inner tegument protein from Homo sapiens (Human).